The sequence spans 751 residues: Zinc finger protein 184 (751 aa).

A KRAB domain is found at 28–99 (VTFKDVIVDF…EPSIPVGTCA (72 aa)). A phosphoserine mark is found at Ser117, Ser122, and Ser199. Residues 191–202 (SNLVTQEPSPEE) show a composition bias toward polar residues. The tract at residues 191 to 212 (SNLVTQEPSPEETSTKRSIKQN) is disordered. Lys206 is covalently cross-linked (Glycyl lysine isopeptide (Lys-Gly) (interchain with G-Cter in SUMO2)). 19 consecutive C2H2-type zinc fingers follow at residues 222–244 (CKCNECGKAFSYCSALIRHQRTH), 250–272 (YKCNECEKAFSRSENLINHQRIH), 278–300 (YKCDQCGKGFIEGPSLTQHQRIH), 306–328 (YKCDECGKAFSQRTHLVQHQRIH), 334–356 (YTCNECGKAFSQRGHFMEHQKIH), 362–384 (FKCDECDKTFTRSTHLTQHQKIH), 390–412 (YKCNECGKAFNGPSTFIRHHMIH), 418–440 (YECNECGKAFSQHSNLTQHQKTH), 446–468 (YDCAECGKSFSYWSSLAQHLKIH), 474–496 (YKCNECGKAFSYCSSLTQHRRIH), 502–524 (FECSECGKAFSYLSNLNQHQKTH), 530–552 (YECKECGKAFIRSSSLAKHERIH), 558–580 (YQCHECGKTFSYGSSLIQHRKIH), 586–608 (YKCNECGRAFNQNIHLTQHKRIH), 614–636 (YECAECGKAFRHCSSLAQHQKTH), 642–664 (YQCNKCEKTFSQSSHLTQHQRIH), 670–692 (YKCNECDKAFSRSTHLTEHQNTH), 698–720 (YNCNECRKTFSQSTYLIQHQRIH), and 726–748 (FGCNDCGKSFRYRSALNKHQRLH).

Belongs to the krueppel C2H2-type zinc-finger protein family. Predominant expression in testis.

It is found in the nucleus. In terms of biological role, may be involved in transcriptional regulation. The sequence is that of Zinc finger protein 184 (ZNF184) from Homo sapiens (Human).